Reading from the N-terminus, the 128-residue chain is Con-Ins F2 (128 aa).

The signal sequence occupies residues 1 to 24; the sequence is MTTSSYFLLVALGLLLYVCRSSFG. Disulfide bonds link cysteine 29/cysteine 104, cysteine 41/cysteine 107, cysteine 53/cysteine 120, and cysteine 106/cysteine 111. Positions 59–89 are cleaved as a propeptide — c peptide; the sequence is LQGGTGKKRGRASLLRKRRAFLSMLKARAKR. The residue at position 115 (glutamate 115) is a 4-carboxyglutamate; partial. Serine 127 bears the Serine amide mark.

It belongs to the insulin family. Heterodimer of A and B chains; disulfide-linked. In terms of tissue distribution, expressed by the venom gland.

The protein resides in the secreted. In terms of biological role, this venom insulin facilitates prey capture by rapidly inducing hypoglycemic shock. Intraperitoneal injection of this peptide into zebrafish lowers blood glucose with the same potency than human insulin. In vivo, when applied to water, this peptide reduces overall locomotor activity of zebrafish larvae, observed as a significant decrease in the percentage of time spent swimming and movement frequency. The protein is Con-Ins F2 of Conus floridulus (Cone snail).